The sequence spans 118 residues: Holo-[acyl-carrier-protein] synthase (118 aa).

Mg(2+)-binding residues include Asp8 and Glu58.

Belongs to the P-Pant transferase superfamily. AcpS family. The cofactor is Mg(2+).

Its subcellular location is the cytoplasm. The enzyme catalyses apo-[ACP] + CoA = holo-[ACP] + adenosine 3',5'-bisphosphate + H(+). Its function is as follows. Transfers the 4'-phosphopantetheine moiety from coenzyme A to a Ser of acyl-carrier-protein. This is Holo-[acyl-carrier-protein] synthase from Streptococcus pyogenes serotype M5 (strain Manfredo).